A 206-amino-acid chain; its full sequence is MARYIGPKCKLSRREGTDLFLKSGVRALESKCNIEAAPGIHGQRRGRQSDYGTQLREKQKVRRIYGVLERQFSGYYKQAASQKGATGENLLQLLECRLDNVVYRMGFGATRAESRQLVSHKAISVNGQTVNVPSYQVKAGDVVAVREKSKNQLRIAQALELCAQRGRVEWVEVDAEKKSGVFKNVPARGDLSADINESLIVELYSK.

Residues 96 to 156 (CRLDNVVYRM…EKSKNQLRIA (61 aa)) form the S4 RNA-binding domain.

This sequence belongs to the universal ribosomal protein uS4 family. As to quaternary structure, part of the 30S ribosomal subunit. Contacts protein S5. The interaction surface between S4 and S5 is involved in control of translational fidelity.

Functionally, one of the primary rRNA binding proteins, it binds directly to 16S rRNA where it nucleates assembly of the body of the 30S subunit. With S5 and S12 plays an important role in translational accuracy. In Ectopseudomonas mendocina (strain ymp) (Pseudomonas mendocina), this protein is Small ribosomal subunit protein uS4.